Consider the following 536-residue polypeptide: MSKRSCQILTLLGLCLVCHEATLVGGHVLVYRKATSQLIEEFNDLPAQFGPNLPSNGLKVYVVPARRPYYGCDSLDRPPHLKYPPSAKFVALVARGECVFERKIRVAQNASYSAVIVYNNEGDDLEQMSAENITGIRIPSVFVGHTTGKALATYFTTEVVLIINDELPFNINTQLILPFSILIGMCFIIMVIYMIYKCIREQRRLRRHRLPKSMLKKLPVLRYTKNNANNKYDTCVICLEDFIEDDKLRVLPCSHPYHTHCIDPWLTENRRVCPICKRKVFTKGEARASRSRQPSLDNVTDTDDDTTPLLQQQQSNGRQVGQVSSASSAGGAAGSSSSVAAAAVAGTTRHGTFRRGHAGRNPFEESQSSDDENALLASTVRPATSSGAHERINPFDRAPNLPAHLAEQLTESRRSVWSRINFASFFRRQPAVISVAAPPYLERVESGTSAMGLPVTGTIAVASPASNNILNPNLSGSFKDEDDMPPHRSIYEPIAISTPAADSATVDDSAFLQTPTQGGIGVAALPHSASDRQFLI.

A signal peptide spans 1 to 21 (MSKRSCQILTLLGLCLVCHEA). The Extracellular segment spans residues 22–174 (TLVGGHVLVY…DELPFNINTQ (153 aa)). The 63-residue stretch at 89–151 (FVALVARGEC…FVGHTTGKAL (63 aa)) folds into the PA domain. N-linked (GlcNAc...) asparagine glycans are attached at residues Asn109 and Asn132. A helical membrane pass occupies residues 175–195 (LILPFSILIGMCFIIMVIYMI). The Cytoplasmic portion of the chain corresponds to 196-536 (YKCIREQRRL…HSASDRQFLI (341 aa)). The RING-type; atypical zinc finger occupies 235-277 (CVICLEDFIEDDKLRVLPCSHPYHTHCIDPWLTENRRVCPICK). 2 disordered regions span residues 287 to 334 (RASR…GAAG) and 350 to 372 (HGTFRRGHAGRNPFEESQSSDDE). Residues 307–334 (TPLLQQQQSNGRQVGQVSSASSAGGAAG) are compositionally biased toward low complexity.

Belongs to the Godzilla family.

It localises to the endosome membrane. The enzyme catalyses S-ubiquitinyl-[E2 ubiquitin-conjugating enzyme]-L-cysteine + [acceptor protein]-L-lysine = [E2 ubiquitin-conjugating enzyme]-L-cysteine + N(6)-ubiquitinyl-[acceptor protein]-L-lysine.. It participates in protein modification; protein ubiquitination. In terms of biological role, endosomal E3 ubiquitin-protein ligase that regulates the recycling endosome pathway by mediating ubiquitination of Synaptobrevin (Syb). Also acts as a regulator of transcytosis in wing imaginal disks by catalyzing ubiquitination of Syb: ubiquitination of Syb promotes transcytosis of wingless (wg) to the basolateral surface. The chain is E3 ubiquitin-protein ligase Godzilla from Drosophila melanogaster (Fruit fly).